The following is a 598-amino-acid chain: Serine hydroxymethyltransferase 7 (598 aa).

Residues 57–85 (QLLEQKAEKTTTVDEPKKDGGGGGDQKED) form a disordered region. A compositionally biased stretch (basic and acidic residues) spans 61–85 (QKAEKTTTVDEPKKDGGGGGDQKED). At K370 the chain carries N6-(pyridoxal phosphate)lysine.

It belongs to the SHMT family. Homotetramer. Pyridoxal 5'-phosphate is required as a cofactor.

The protein resides in the cytoplasm. The catalysed reaction is (6R)-5,10-methylene-5,6,7,8-tetrahydrofolate + glycine + H2O = (6S)-5,6,7,8-tetrahydrofolate + L-serine. It participates in one-carbon metabolism; tetrahydrofolate interconversion. Catalyzes the interconversion of serine and glycine. The chain is Serine hydroxymethyltransferase 7 (SHM7) from Arabidopsis thaliana (Mouse-ear cress).